The primary structure comprises 485 residues: Glutamate--tRNA ligase 1 (485 aa).

Residues 10–20 (PSPTGAIHIGN) carry the 'HIGH' region motif. The 'KMSKS' region signature appears at 252 to 256 (KLSKR). Lys-255 is a binding site for ATP.

This sequence belongs to the class-I aminoacyl-tRNA synthetase family. Glutamate--tRNA ligase type 1 subfamily. Monomer.

It is found in the cytoplasm. The enzyme catalyses tRNA(Glu) + L-glutamate + ATP = L-glutamyl-tRNA(Glu) + AMP + diphosphate. Functionally, catalyzes the attachment of glutamate to tRNA(Glu) in a two-step reaction: glutamate is first activated by ATP to form Glu-AMP and then transferred to the acceptor end of tRNA(Glu). In Thermoanaerobacter sp. (strain X514), this protein is Glutamate--tRNA ligase 1.